A 2281-amino-acid chain; its full sequence is MKRHQFKSWIFELREILREIKNSHSFLDSWTKFDSVGSFTHIFFHQERFMNLFDPRIWSILLSRDSQGSTSNRYFTIKGVVLFVVTVLIYRINNRNMVERKNLYLMGLLPIPIPMNSIGPRNDTLEESFGSSNINRLIVSLLYLPKGKKISESCFLDPKESTWVLPITKKCIMPESNWGSRWWRNWIGKKRDSSCKISNETVAGIEISFKEKDIKYLEFLFVYYTDDPIRKDHDWELFDRLSPRKKRNIINFNSGQLFEILVKHWICYLMSAFREKRPIEVEGFFKQQGAESTIQSNDIEHVSHLFSRNKWGISLQNCAQFHMWQFRQDLFVSWGKNPHESDFLRKVSRENWIWLDNVWLVNKDRFFSKVRNVSSNIQYDSTRSIFVQVRDSSQLKGSSDQSRDHFDSIRNEDSEYHTLINQREIQQLKERSILWDPSFLQTERTEIESDRFPKCLSGYSSMSRLFTEREKQMNNHLLPEEIEEFLGNPTRSIRSFFSDRWSELHLGSNPTERSTRDQKLLKKQQDVSFVPSRRSENKEMVDIFKIITYLQNTVSIHPISSDPGCDMVPKDEPDMDSSNKISFLNKNPFLDLFHLFHDRNRGGYTLHHDFESEERFQEIADLFTLSITEPDLVYHKGFALSIDSYGLDQKKFLNEVFNSRDESKNKSLSLADPPIFYEENESFYRRIRKKSVRISCGNDLEDPKQKIVVFASNNIMEAVNQYRLIRNLIQIQYSTYGYIRNVSNRFFLMNRSDRNFEYGIQRDQIGNDTLNHRTIMKYMINQHLSNLKKSQKKWFDPLISRTERSMNRDPDAYRYKWSNGSKNFQEHFVSEQKSRFQVVFDRLRINQYSIDWSEVIDKKDLSKSLRFFLSKSLLFLSKSLLFLSKSLPFFFVSFGNIPIHRSEIHIYELKGPNDQLCNQLLESIGVQIVHLNKLKPFLLDTSQKSKFLINGGTISPFLFNKIQKWMIDSFHTRNNRRKSFDNTDSYFSMISHDRDNWLNPVKPFHRSSLISSFYKANRLRFLNNPHHFWFYCNKRFPFYVEKARINNYDLTYGQFLNILFIRNKIFSLCVGKKKHAFLERDTISPIESQVSNIFIPNDFPQGGDETYNLYKSFHFPIRSDPFVRRAIYSIADISGTPLTEGQIVNFERTYCQPLSDMNISDSEGKNFHQYLNFNSNMGLIHTPCSEKYLPSEKRKNRSLCLKKCVEKRQMYRTFQRDSAFSNLSKWNLFQTYMPWFLTSTGCKYLNFTLLDTFSDLLPILSSSKKFVSIFNDIMHGSDISWPIPQKKWCLPQWNLISEISSKCLHNLLLSEEMIHRNNESPVPLIWAHLRSPNAREFLYSILFLLLVAGYLVRTHLLFVSRASSELQTEFEKIKSLMIPSYMIELRKLLDRYPTSELNSFWLKNLFLVALEQLGDSLEEIRGSASGGNMLLGGGPAYGVKSIRSKKKYLNINLIDLISIIPNPINRITFSRNTRHLSRTSKEIYSLIRKRKNVNGDWIDDKIESWVANSDSIDDEEREFLVQFSTLTTEKRIDQILLSLTHSDHLSKNDSGYQMIEQPGSIYLRYLVDIHKKYLMNYEFNRSCLAERRIFLAHYQTITYSQTSCGANSFHFPSHGKPFSLRLALSPSRGILVIGSIGTGRSYLVKYLATNSYVPFITLFPNKFLDDKPKGYLIDDIDIDDSDDIDDSDDIYDSDDIDDLDTELLTMTNALTMYMTPKIDRFDITLQFELAKAMSPCIIWIPNIHDLYVNESNYLSLGLLVNYLSRDCERCSTRNILVIASTHTPQKVDPALIAPNKLNTCIKIRRLLIPQQRKHFFTLSYTRGFRLEKKMFHTNGFGSITMGSNARDLVALTNEALSISITQKKSIIDTNTIRSALHRQTWDLRSQVRSVRDHGILFYQIGRAVAQNVLLSNCPIDPISIYMKKKSCKEGDSYLYKWYFELGTSMKKLTILLYLLSCSAGSVAQDLWSLPGPDEKNWITSYGLVENDSDLVHGLLEVEGALVGSSRTEKDCSQFDNDRVTLLLRSEPRNPLDMMQNGSCSIVDQRFLYEKYESEFEEGEGALDPQQIEEDLFNHIVWAPRIWRPCGNLFDCIERPNELGFPYWARSFRGKQIIYHKEDELQENDSEFLQSGTMQYQTRDRSSKEQGFFRISQFIWDPADPFFFLFKDQPFVSVFSRREFFADEEMSKGLLTSQTNPPTSIYKRWFIKNTQEKHFELLIHRQRWLRTNSSLSNGSFRSNTLSESYQYLSNLFLSNGTLLDQMTKTLLRKRWLFPDEMKIGFM.

1634–1641 (GSIGTGRS) provides a ligand contact to ATP.

Belongs to the Ycf2 family.

The protein localises to the plastid. It is found in the chloroplast stroma. Functionally, probable ATPase of unknown function. Its presence in a non-photosynthetic plant (Epifagus virginiana) and experiments in tobacco indicate that it has an essential function which is probably not related to photosynthesis. This chain is Protein Ycf2, found in Buxus microphylla (Littleleaf boxwood).